The following is a 137-amino-acid chain: Methylglyoxal synthase (137 aa).

Positions 1-137 constitute an MGS-like domain; sequence MKIALIAHDR…NIVHGRDRDA (137 aa). Substrate is bound by residues His8, Lys12, 34 to 37, and 54 to 55; these read TGTT and SG. Asp60 acts as the Proton donor/acceptor in catalysis. His87 contributes to the substrate binding site.

Belongs to the methylglyoxal synthase family.

It catalyses the reaction dihydroxyacetone phosphate = methylglyoxal + phosphate. In terms of biological role, catalyzes the formation of methylglyoxal from dihydroxyacetone phosphate. This is Methylglyoxal synthase from Bacillus licheniformis (strain ATCC 14580 / DSM 13 / JCM 2505 / CCUG 7422 / NBRC 12200 / NCIMB 9375 / NCTC 10341 / NRRL NRS-1264 / Gibson 46).